We begin with the raw amino-acid sequence, 173 residues long: Regulator of ribonuclease activity A (173 aa).

This sequence belongs to the RraA family. As to quaternary structure, homotrimer. Binds to both RNA-binding sites in the C-terminal region of Rne and to RhlB.

It localises to the cytoplasm. Functionally, globally modulates RNA abundance by binding to RNase E (Rne) and regulating its endonucleolytic activity. Can modulate Rne action in a substrate-dependent manner by altering the composition of the degradosome. Modulates RNA-binding and helicase activities of the degradosome. The protein is Regulator of ribonuclease activity A of Vibrio vulnificus (strain YJ016).